We begin with the raw amino-acid sequence, 379 residues long: Dual-specificity RNA methyltransferase RlmN (379 aa).

Catalysis depends on glutamate 90, which acts as the Proton acceptor. One can recognise a Radical SAM core domain in the interval glutamate 96–aspartate 348. An intrachain disulfide couples cysteine 103 to cysteine 353. 3 residues coordinate [4Fe-4S] cluster: cysteine 110, cysteine 114, and cysteine 117. S-adenosyl-L-methionine is bound by residues glycine 179–glutamate 180, serine 211, serine 233–histidine 235, and asparagine 310. The active-site S-methylcysteine intermediate is cysteine 353.

This sequence belongs to the radical SAM superfamily. RlmN family. Requires [4Fe-4S] cluster as cofactor.

Its subcellular location is the cytoplasm. The catalysed reaction is adenosine(2503) in 23S rRNA + 2 reduced [2Fe-2S]-[ferredoxin] + 2 S-adenosyl-L-methionine = 2-methyladenosine(2503) in 23S rRNA + 5'-deoxyadenosine + L-methionine + 2 oxidized [2Fe-2S]-[ferredoxin] + S-adenosyl-L-homocysteine. The enzyme catalyses adenosine(37) in tRNA + 2 reduced [2Fe-2S]-[ferredoxin] + 2 S-adenosyl-L-methionine = 2-methyladenosine(37) in tRNA + 5'-deoxyadenosine + L-methionine + 2 oxidized [2Fe-2S]-[ferredoxin] + S-adenosyl-L-homocysteine. Its function is as follows. Specifically methylates position 2 of adenine 2503 in 23S rRNA and position 2 of adenine 37 in tRNAs. m2A2503 modification seems to play a crucial role in the proofreading step occurring at the peptidyl transferase center and thus would serve to optimize ribosomal fidelity. This is Dual-specificity RNA methyltransferase RlmN from Nitrosomonas europaea (strain ATCC 19718 / CIP 103999 / KCTC 2705 / NBRC 14298).